Consider the following 564-residue polypeptide: Septation ring formation regulator EzrA (564 aa).

Over 1–2 the chain is Extracellular; sequence ME. A helical membrane pass occupies residues 3 to 21; that stretch reads FVIGLLALFLILFATGYLF. Residues 22–564 are Cytoplasmic-facing; sequence RKNIYKEIDR…RLEADAKQPE (543 aa). Coiled coils occupy residues 99-159, 243-281, and 310-498; these read QKSK…AYSH, KGYKLDHIQVEKELENLLKELKRAEDALLDELDLEEAAA, and KVPE…VELV.

It belongs to the EzrA family.

It is found in the cell membrane. Functionally, negative regulator of FtsZ ring formation; modulates the frequency and position of FtsZ ring formation. Inhibits FtsZ ring formation at polar sites. Interacts either with FtsZ or with one of its binding partners to promote depolymerization. The chain is Septation ring formation regulator EzrA from Bacillus licheniformis (strain ATCC 14580 / DSM 13 / JCM 2505 / CCUG 7422 / NBRC 12200 / NCIMB 9375 / NCTC 10341 / NRRL NRS-1264 / Gibson 46).